Here is a 929-residue protein sequence, read N- to C-terminus: Chaperone protein ClpC1, chloroplastic (929 aa).

A chloroplast-targeting transit peptide spans 1 to 38 (MAMATRVLAQSTPPSLACYQRNVPSRGSGRSRRSVKMM). The 143-residue stretch at 95–237 (FERFTEKAIK…RTQVIRMVGE (143 aa)) folds into the Clp R domain. Repeat stretches follow at residues 98 to 163 (FTEK…IGRG) and 173 to 237 (FTPR…MVGE). The tract at residues 257–504 (LEEYGTNLTK…RVRLRHAQVP (248 aa)) is i. 302 to 309 (GEPGVGKT) is an ATP binding site. Residues 511-546 (EKELRQITKEKNEAVRGQDFEKAGTLRDREIELRAE) enclose the UVR domain. The segment at 552–571 (AKGKEMSKAESETGEEGPMV) is disordered. Residues 553 to 562 (KGKEMSKAES) are compositionally biased toward basic and acidic residues. The II stretch occupies residues 571–762 (VTESDIQHIV…LLIMTSNVGS (192 aa)). 645-652 (GPTGVGKS) is a binding site for ATP. Residues 908-919 (LNGGSGTPTTSL) are compositionally biased toward polar residues. The segment at 908–929 (LNGGSGTPTTSLEEQEDSLPVA) is disordered. The span at 920–929 (EEQEDSLPVA) shows a compositional bias: acidic residues.

This sequence belongs to the ClpA/ClpB family. ClpC subfamily. In terms of assembly, homodimer. May form hexamer and interact with Clp core. Interacts (via N-terminus) with CLPS1. Interacts with CLPF. In terms of tissue distribution, highly expressed in rosette leaves. Expressed in roots, stems and inflorescences. Expressed in photosynthetic green tissues with high levels in young, developing leaf tissues.

It is found in the plastid. The protein localises to the chloroplast stroma. Its subcellular location is the chloroplast membrane. In terms of biological role, molecular chaperone that hydrolyzes ATP and is associated with the chloroplast protein import apparatus. May function as the motor for chloroplast protein translocation, as translocation requires ATP hydrolysis in the stroma. May interact with a ClpP-like protease involved in degradation of denatured proteins in the chloroplast. Involved in the regulation of chlorophyll b biosynthesis through the destabilization of chlorophyllide a oxygenase (CAO) protein in response to the accumulation of chlorophyll b. Involved in leaf iron homeostasis. The chain is Chaperone protein ClpC1, chloroplastic from Arabidopsis thaliana (Mouse-ear cress).